The chain runs to 263 residues: ATP synthase subunit delta (263 aa).

This sequence belongs to the ATPase delta chain family. F-type ATPases have 2 components, F(1) - the catalytic core - and F(0) - the membrane proton channel. F(1) has five subunits: alpha(3), beta(3), gamma(1), delta(1), epsilon(1). F(0) has three main subunits: a(1), b(2) and c(10-14). The alpha and beta chains form an alternating ring which encloses part of the gamma chain. F(1) is attached to F(0) by a central stalk formed by the gamma and epsilon chains, while a peripheral stalk is formed by the delta and b chains.

Its subcellular location is the cell membrane. Its function is as follows. F(1)F(0) ATP synthase produces ATP from ADP in the presence of a proton or sodium gradient. F-type ATPases consist of two structural domains, F(1) containing the extramembraneous catalytic core and F(0) containing the membrane proton channel, linked together by a central stalk and a peripheral stalk. During catalysis, ATP synthesis in the catalytic domain of F(1) is coupled via a rotary mechanism of the central stalk subunits to proton translocation. Functionally, this protein is part of the stalk that links CF(0) to CF(1). It either transmits conformational changes from CF(0) to CF(1) or is implicated in proton conduction. This chain is ATP synthase subunit delta, found in Cutibacterium acnes (strain DSM 16379 / KPA171202) (Propionibacterium acnes).